A 1241-amino-acid chain; its full sequence is MIENWPKKPEGSQWTDDQWKAVVANGRDILVAAAAGSGKTAVLVERIIKKIINEENPVDVDRLLVVTFTNAAAQEMKNRIGEALEKVLIDEPGSQHVRKQLSLLNKASISTIHSFCLQVIRGYYYMLDVDPRFRIANQTENELLKEEVLDDILEEEYGIEDNTIFFELVDRYTSDRSDDDLQRMILALHTESRAHPNPEKWLDKLVEAYDVEGKTIEDLVYASYLLEDVKFQLETAEQHIRKATELAMLPDGPAPRVETLQADVALLGTLSSAARESWTSVYEAMQNVSWQTLKRIKKSDYNEDVVKQVDSLRNKAKDEVKKLQEELFSRKPESFLRDFQDMHPVLEKLVQLVKVFTERFQAMKRDKGMVDFTDLEHFCLQILSEQSENGEMNPSAVAFQYRNKFTEVLVDEYQDTNFVQESIIKFVTKDSESEGNLFMVGDVKQSIYRFRLAEPGLFLGKYKRFTQEGLGGGMKIDLAKNFRSRHEVLAGTNFIFKQIMGEEVGEIDYDADAELKLGATYPEGEDVAAELLCIQQTEEEVIDGEEGAEVEKAQLEARLMAQRIKAMVDSGYEVYDRKTDSMRPVQYRDFVILLRSMPWAPQIMEELKLQGIPVYADLATGYFEATEVNIMMNVFRVIDNPMQDIPLAAVLRSPIVGLNDEDLATLRAHGKKGSFYEVMSSFLKGAPLEEEQELHEKLEWFYNLLQGWREFARQQSLSDLIWKVYGETGYYDFVGGLPAGKQRQANLRVLYDRARQYEATSFRGLFRFLRFIERILERGDDMGTARALGEQEDVVRIMTIHKSKGLEFPVVFVAGLGRRFNTQDLMKRFLLHKDFGFGSQFIDPRKRIKYTTLSQLAIKRKMKMELIAEEMRVLYVALTRAKEKLILIGTVKDANKEMEKWLDAREHSEWLLPDHIRAGASCYLDWIAPSLYRHRDSEMLLELGQGSIPDEIYGYDTNWKVEVVDGNTLLAPEPVQEEKQELLEALREKKAVPLQSERKEEVYDRLMWKYGYEDATSYRAKQSVTEIKRNYQSEEGSDNAFIKKLRTPIKTRPRFMEKKGLTYAERGTAVHAVMQHVDLKKPITVEVLQEQIAGMVNKELLTFEQAEEIAIEKVISFFDSDLGKRVLAAKSVEREVPFTMMLAAEEAYQDWQGKSEETILVQGVIDCMIEEEDGITLIDFKTDTIEGKFPGGFEQAKPILEDRYKVQLSLYAKALEKSLQHPVKEKCLYFFDGNHVVNIEE.

The UvrD-like helicase ATP-binding domain maps to 12 to 485 (SQWTDDQWKA…IDLAKNFRSR (474 aa)). Position 33 to 40 (33 to 40 (AAAGSGKT)) interacts with ATP. A UvrD-like helicase C-terminal domain is found at 505–805 (GEIDYDADAE…RIMTIHKSKG (301 aa)).

Belongs to the helicase family. AddA subfamily. In terms of assembly, heterodimer of AddA and AddB/RexB. Mg(2+) serves as cofactor.

It catalyses the reaction Couples ATP hydrolysis with the unwinding of duplex DNA by translocating in the 3'-5' direction.. The enzyme catalyses ATP + H2O = ADP + phosphate + H(+). In terms of biological role, the heterodimer acts as both an ATP-dependent DNA helicase and an ATP-dependent, dual-direction single-stranded exonuclease. Recognizes the chi site generating a DNA molecule suitable for the initiation of homologous recombination. The AddA nuclease domain is required for chi fragment generation; this subunit has the helicase and 3' -&gt; 5' nuclease activities. This Bacillus cereus (strain G9842) protein is ATP-dependent helicase/nuclease subunit A.